We begin with the raw amino-acid sequence, 716 residues long: Interleukin-31 receptor subunit alpha (716 aa).

The N-terminal stretch at 1–18 (MWTLALWAFSFLCKFSLA) is a signal peptide. Topologically, residues 19 to 499 (VLPTKPENIS…TNGVRINFKT (481 aa)) are extracellular. Fibronectin type-III domains follow at residues 23–115 (KPEN…IAKT), 117–211 (PPII…TMEE), 213–304 (PHVL…ILRI), 305–403 (PDVH…QAYA), and 408–502 (PLKG…TLSI). N-linked (GlcNAc...) asparagine glycosylation is found at Asn-36, Asn-48, and Asn-64. Residue Asn-382 is glycosylated (N-linked (GlcNAc...) asparagine). Residues 500 to 520 (LSISVFEIVLLTSLVGGGLLL) traverse the membrane as a helical segment. The Cytoplasmic segment spans residues 521–716 (LSIKTVTFGL…NIPEHSKGEV (196 aa)). 2 disordered regions span residues 622 to 641 (EYVTSPSRPDGPPGKSFKEP) and 648 to 696 (ASED…LKNS). The segment covering 670–679 (QPSSSCQSPG) has biased composition (polar residues).

The protein belongs to the type I cytokine receptor family. Type 2 subfamily. As to quaternary structure, heterodimer with OSMR. Interacts with JAK1 and STAT3. In terms of processing, N-glycosylated. In terms of tissue distribution, expressed in a subset of dorsal root ganglia neurons. Expressed in spinal cord and trigeminal ganglion (at protein level). Expressed in skin, testis, bone marrow and thymus.

The protein resides in the cell membrane. Its subcellular location is the presynaptic cell membrane. It is found in the cell projection. The protein localises to the axon. Functionally, associates with OSMR to form the interleukin-31 receptor which activates STAT3 and to a lower extent STAT1 and STAT5. May function in skin immunity. Mediates IL31-induced itch, probably in a manner dependent on cation channels TRPA1 and TRPV1. Positively regulates numbers and cycling status of immature subsets of myeloid progenitor cells in bone marrow in vivo and enhances myeloid progenitor cell survival in vitro. This Mus musculus (Mouse) protein is Interleukin-31 receptor subunit alpha (Il31ra).